A 239-amino-acid polypeptide reads, in one-letter code: Xyloglucan-specific endo-beta-1,4-glucanase A (239 aa).

The N-terminal stretch at 1–14 (MKLLALSLASLASA) is a signal peptide. Asparagine 172 carries N-linked (GlcNAc...) asparagine glycosylation.

The protein belongs to the glycosyl hydrolase 12 (cellulase H) family.

The protein localises to the secreted. It carries out the reaction xyloglucan + H2O = xyloglucan oligosaccharides.. In terms of biological role, catalyzes endohydrolysis of 1,4-beta-D-glucosidic linkages in xyloglucan with retention of the beta-configuration of the glycosyl residues. Specific for xyloglucan and does not hydrolyze other cell wall components. Active against tamarind xyloglucan. The sequence is that of Xyloglucan-specific endo-beta-1,4-glucanase A (xgeA) from Emericella nidulans (strain FGSC A4 / ATCC 38163 / CBS 112.46 / NRRL 194 / M139) (Aspergillus nidulans).